The primary structure comprises 174 residues: NADH-quinone oxidoreductase subunit C (174 aa).

The protein belongs to the complex I 30 kDa subunit family. NDH-1 is composed of 14 different subunits. Subunits NuoB, C, D, E, F, and G constitute the peripheral sector of the complex.

It localises to the cell membrane. It catalyses the reaction a quinone + NADH + 5 H(+)(in) = a quinol + NAD(+) + 4 H(+)(out). In terms of biological role, NDH-1 shuttles electrons from NADH, via FMN and iron-sulfur (Fe-S) centers, to quinones in the respiratory chain. The immediate electron acceptor for the enzyme in this species is believed to be ubiquinone. Couples the redox reaction to proton translocation (for every two electrons transferred, four hydrogen ions are translocated across the cytoplasmic membrane), and thus conserves the redox energy in a proton gradient. The protein is NADH-quinone oxidoreductase subunit C of Roseiflexus castenholzii (strain DSM 13941 / HLO8).